Reading from the N-terminus, the 207-residue chain is Small ribosomal subunit protein uS4 (207 aa).

The 64-residue stretch at 96–159 (RRLDNVVYRL…RASTFIADNI (64 aa)) folds into the S4 RNA-binding domain.

This sequence belongs to the universal ribosomal protein uS4 family. As to quaternary structure, part of the 30S ribosomal subunit. Contacts protein S5. The interaction surface between S4 and S5 is involved in control of translational fidelity.

One of the primary rRNA binding proteins, it binds directly to 16S rRNA where it nucleates assembly of the body of the 30S subunit. Its function is as follows. With S5 and S12 plays an important role in translational accuracy. The chain is Small ribosomal subunit protein uS4 from Leptospira borgpetersenii serovar Hardjo-bovis (strain JB197).